A 304-amino-acid polypeptide reads, in one-letter code: tRNA dimethylallyltransferase (304 aa).

An ATP-binding site is contributed by 16 to 23 (GPTASGKS). 18–23 (TASGKS) is a substrate binding site. Interaction with substrate tRNA regions lie at residues 41 to 44 (DSMQ) and 165 to 169 (QRIIR).

The protein belongs to the IPP transferase family. Monomer. Mg(2+) is required as a cofactor.

The enzyme catalyses adenosine(37) in tRNA + dimethylallyl diphosphate = N(6)-dimethylallyladenosine(37) in tRNA + diphosphate. Functionally, catalyzes the transfer of a dimethylallyl group onto the adenine at position 37 in tRNAs that read codons beginning with uridine, leading to the formation of N6-(dimethylallyl)adenosine (i(6)A). In Allorhizobium ampelinum (strain ATCC BAA-846 / DSM 112012 / S4) (Agrobacterium vitis (strain S4)), this protein is tRNA dimethylallyltransferase.